Consider the following 211-residue polypeptide: Ribosomal RNA small subunit methyltransferase G (211 aa).

S-adenosyl-L-methionine-binding positions include Gly-74, Leu-79, 125 to 126 (AE), and Arg-140.

Belongs to the methyltransferase superfamily. RNA methyltransferase RsmG family.

The protein resides in the cytoplasm. In terms of biological role, specifically methylates the N7 position of guanine in position 518 of 16S rRNA. The chain is Ribosomal RNA small subunit methyltransferase G from Clavibacter sepedonicus (Clavibacter michiganensis subsp. sepedonicus).